A 228-amino-acid polypeptide reads, in one-letter code: Probable septum site-determining protein MinC (228 aa).

Belongs to the MinC family. In terms of assembly, interacts with MinD and FtsZ.

Its function is as follows. Cell division inhibitor that blocks the formation of polar Z ring septums. Rapidly oscillates between the poles of the cell to destabilize FtsZ filaments that have formed before they mature into polar Z rings. Prevents FtsZ polymerization. The chain is Probable septum site-determining protein MinC from Pectobacterium atrosepticum (strain SCRI 1043 / ATCC BAA-672) (Erwinia carotovora subsp. atroseptica).